The chain runs to 444 residues: Adenylosuccinate synthetase (444 aa).

Residues 19-25 (GDEGKGK) and 47-49 (GHT) contribute to the GTP site. The Proton acceptor role is filled by Asp-20. Mg(2+) contacts are provided by Asp-20 and Gly-47. Residues 20 to 23 (DEGK), 45 to 48 (NAGH), Thr-139, Arg-153, Gln-234, Thr-249, and Arg-317 each bind IMP. His-48 (proton donor) is an active-site residue. 313–319 (TVTGRPR) provides a ligand contact to substrate. GTP is bound by residues Arg-319, 345–347 (KLD), and 427–429 (STG).

It belongs to the adenylosuccinate synthetase family. Homodimer. Mg(2+) is required as a cofactor.

The protein resides in the cytoplasm. The enzyme catalyses IMP + L-aspartate + GTP = N(6)-(1,2-dicarboxyethyl)-AMP + GDP + phosphate + 2 H(+). The protein operates within purine metabolism; AMP biosynthesis via de novo pathway; AMP from IMP: step 1/2. In terms of biological role, plays an important role in the de novo pathway of purine nucleotide biosynthesis. Catalyzes the first committed step in the biosynthesis of AMP from IMP. The protein is Adenylosuccinate synthetase of Methylibium petroleiphilum (strain ATCC BAA-1232 / LMG 22953 / PM1).